Consider the following 501-residue polypeptide: Cytochrome P450 2J1 (501 aa).

C447 is a binding site for heme.

It belongs to the cytochrome P450 family. It depends on heme as a cofactor. As to expression, small intestine.

The protein localises to the endoplasmic reticulum membrane. It localises to the microsome membrane. The enzyme catalyses an organic molecule + reduced [NADPH--hemoprotein reductase] + O2 = an alcohol + oxidized [NADPH--hemoprotein reductase] + H2O + H(+). In terms of biological role, catalyzes the N-demethylation of benzphetamine to formaldehyde. The polypeptide is Cytochrome P450 2J1 (CYP2J1) (Oryctolagus cuniculus (Rabbit)).